The primary structure comprises 151 residues: Small ribosomal subunit protein uS19 (151 aa).

It belongs to the universal ribosomal protein uS19 family.

This Picea mariana (Black spruce) protein is Small ribosomal subunit protein uS19 (RPS15).